A 251-amino-acid chain; its full sequence is Membrane-anchored junction protein (251 aa).

The Nuclear segment spans residues 1 to 227 (MSLKPFTYPF…HSNPPPLKEP (227 aa)). The tract at residues 140 to 225 (RKRKLMEEPS…LEHSNPPPLK (86 aa)) is disordered. Over residues 183 to 198 (EDSQQDTPASDSTAVT) the composition is skewed to polar residues. A helical membrane pass occupies residues 228–246 (AARGFLGFLSALFPFRYFF). The Perinuclear space segment spans residues 247–251 (RKSTQ).

Belongs to the MAJIN family. As to quaternary structure, component of the MAJIN-TERB1-TERB2 complex, composed of MAJIN, TERB1 and TERB2.

The protein resides in the nucleus inner membrane. It localises to the chromosome. Its subcellular location is the telomere. Its function is as follows. Meiosis-specific telomere-associated protein involved in meiotic telomere attachment to the nucleus inner membrane, a crucial step for homologous pairing and synapsis. Component of the MAJIN-TERB1-TERB2 complex, which promotes telomere cap exchange by mediating attachment of telomeric DNA to the inner nuclear membrane and replacement of the protective cap of telomeric chromosomes: in early meiosis, the MAJIN-TERB1-TERB2 complex associates with telomeric DNA and the shelterin/telosome complex. During prophase, the complex matures and promotes release of the shelterin/telosome complex from telomeric DNA. In the complex, MAJIN acts as the anchoring subunit to the nucleus inner membrane. MAJIN shows DNA-binding activity, possibly for the stabilization of telomere attachment on the nucleus inner membrane. The polypeptide is Membrane-anchored junction protein (Rattus norvegicus (Rat)).